The chain runs to 132 residues: Nuclear transition protein 2 (132 aa).

Positions 1–20 (MDTKTQSLPNTHAQPHSNSR) are enriched in polar residues. The segment at 1–132 (MDTKTQSLPN…KRQSSGRKYN (132 aa)) is disordered. Positions 12, 16, 24, 29, 31, and 35 each coordinate Zn(2+). Basic residues predominate over residues 37–59 (SRSRSRSCRSRSSSRRPRSHRSP). Residues 82–94 (SHQCPSRPVTHSC) are compositionally biased toward polar residues. Residues 105 to 113 (GKVIKRKQV) carry the Nuclear localization signal motif. Residues 108-132 (IKRKQVKRSKQVYKRKRQSSGRKYN) are compositionally biased toward basic residues. Serine 127 carries the phosphoserine modification.

The protein belongs to the nuclear transition protein 2 family. Testis.

The protein resides in the nucleus. The protein localises to the nucleolus. It localises to the chromosome. Plays a key role in the replacement of histones to protamine in the elongating spermatids of mammals. In condensing spermatids, loaded onto the nucleosomes, where it promotes the recruitment and processing of protamines, which are responsible for histone eviction. The chain is Nuclear transition protein 2 (TNP2) from Bos taurus (Bovine).